We begin with the raw amino-acid sequence, 261 residues long: MTYNPRIGGFTHVKQASFDVHVKRGEAQPRTSFAQQIKRIFSKIGETLGQLFRHRAPDSAPGRVRLQGVRYVGSYRPTGDAKQAIRHFVDEAVKQVAHARTPEIRQDAEFGRQVYEATLCAIFSEAKDRFCMDPATRAGNVRPAFIEALGDAARATGLPGADKQGVFTPSGAGTNPLYTEIRLRADTLMGAELAARPEYRELQPYARQQAIDLVANALPAERSNTLVEFRQTVQTLEATYRRAAQDASRDEKGATNAADGA.

The protein belongs to the GEF (guanine exchange factor) SopE family. In terms of assembly, monomer. Interacts with human CDC42.

It is found in the secreted. Activator for both CDC42 and RAC1 by directly interacting with these Rho GTPases and acting as a guanine nucleotide exchange factor (GEF). This activation results in actin cytoskeleton rearrangements and stimulates membrane ruffling, thus promoting bacterial entry into non-phagocytic cells. The chain is Guanine nucleotide exchange factor BopE (bopE) from Burkholderia pseudomallei (strain 1710b).